We begin with the raw amino-acid sequence, 181 residues long: Virion protein 3 (181 aa).

It belongs to the tevenvirinae baseplate structural protein gp8 family.

It is found in the virion. Its function is as follows. Putative baseplate protein. This chain is Virion protein 3, found in Enterococcus faecalis (Streptococcus faecalis).